Consider the following 154-residue polypeptide: Transcriptional repressor NrdR (154 aa).

The segment at 3–34 is a zinc-finger region; the sequence is CPTCKYNGTRVVDSRPADDGNSIRRRRECEKC. An ATP-cone domain is found at 49–139; the sequence is LIVVKKDGAR…VYRQFKDISV (91 aa).

It belongs to the NrdR family. The cofactor is Zn(2+).

Its function is as follows. Negatively regulates transcription of bacterial ribonucleotide reductase nrd genes and operons by binding to NrdR-boxes. This Listeria innocua serovar 6a (strain ATCC BAA-680 / CLIP 11262) protein is Transcriptional repressor NrdR.